Consider the following 130-residue polypeptide: Small ribosomal subunit protein uS9 (130 aa).

It belongs to the universal ribosomal protein uS9 family.

The chain is Small ribosomal subunit protein uS9 from Burkholderia ambifaria (strain MC40-6).